Consider the following 406-residue polypeptide: uncharacterized protein (406 aa).

Residue G2 is the site of N-myristoyl glycine; by host attachment. Residues 291–406 (QLESTTEVKP…FQYNKPTYDI (116 aa)) are disordered. A compositionally biased stretch (basic and acidic residues) spans 296-310 (TEVKPESTTEVKPES). Over residues 311 to 323 (TSEVQPESTTEFQ) the composition is skewed to polar residues. Composition is skewed to low complexity over residues 324 to 333 (PESTTVVEPE), 341 to 351 (ESTTEFQPEST), and 359 to 369 (TTEPQVESTTE). Positions 370-406 (FQPESSTEPQVESTVEVQAESMNESSYFQYNKPTYDI) are enriched in polar residues.

This is an uncharacterized protein from Acanthamoeba polyphaga (Amoeba).